Here is a 142-residue protein sequence, read N- to C-terminus: Large ribosomal subunit protein uL13 (142 aa).

This sequence belongs to the universal ribosomal protein uL13 family. As to quaternary structure, part of the 50S ribosomal subunit.

Its function is as follows. This protein is one of the early assembly proteins of the 50S ribosomal subunit, although it is not seen to bind rRNA by itself. It is important during the early stages of 50S assembly. This is Large ribosomal subunit protein uL13 from Pseudoalteromonas translucida (strain TAC 125).